The primary structure comprises 342 residues: Delta(6)-protoilludene synthase (342 aa).

The Mg(2+) site is built by D81, N217, S221, and E225. A DDXXD motif motif is present at residues 81 to 85; the sequence is DEYSD. Positions 306 and 307 each coordinate (2E,6E)-farnesyl diphosphate.

The protein belongs to the terpene synthase family. Requires Mg(2+) as cofactor.

It catalyses the reaction (2E,6E)-farnesyl diphosphate = Delta(6)-protoilludene + diphosphate. Delta(6)-protoilludene synthase, part of the gene cluster that mediates the biosynthesis of melleolides, a range of antifungal and phytotoxic polyketide derivatives composed of an orsellinic acid (OA) moiety esterified to various sesquiterpene alcohols. The first step in melleolides biosynthesis is performed by the delta(6)-protoilludene synthase PRO1 which catalyzes the cyclization of farnesyl diphosphate to protoilludene. The orsellinic acid synthase armB produces OA by condensing acetyl-CoA with 3 malonyl-CoA units in a three-round chain elongation reaction folowed by a C2-C7 ring closure. ArmB further catalyzes the trans-esterification of OA to the various sesquiterpene alcohols resulting from the hydroxylation of protoilludene. The melleolides cluster also includes 5 cytochrome P450 monooxygenases, 4 NAD(+)-dependent oxidoreductases, one flavin-dependent oxidoreductase, and one O-methyltransferase. The cytochrome P450 monooxygenases may be involved in protoilludene hydroxylation to elaborate melleolides with multiple alcohol groups, such as melleolide D, which carries alcohol functionalities at C-4, C-5, C-10, and C-13. The role of the NAD(+)-dependent enzymes remains unknown. Numerous melleolides, including arnamial, show 5'-O-methylation of the aromatic moiety which may be catalyzed by the methyltransferase encoded in the cluster. The flavin-dependent oxidoreductase might represent the dehydrogenase yielding the aldehyde in position 1 of arnamial and other melleolides. Finally, several halogenases, localized outside of the cluster, are able to catalyze the transfer of a single chlorine atom to the melleolide backbone, resulting in a 6'-chloromelleolide product. This chain is Delta(6)-protoilludene synthase, found in Armillaria ostoyae (Armillaria root rot fungus).